Reading from the N-terminus, the 460-residue chain is 4-O-methyl-glucuronoyl methylesterase (460 aa).

An N-terminal signal peptide occupies residues 1 to 17; that stretch reads MASRFFALLLLAIPIQA. Q18 is modified (pyrrolidone carboxylic acid). The 36-residue stretch at 18–53 folds into the CBM1 domain; it reads QSPVWGQCGGIGWSGPTTCVGGATCVSYNPYYSQCI. 3 disulfides stabilise this stretch: C96–C131, C277–C412, and C309–C384. The GXSYXG catalytic site motif signature appears at 276-281; it reads GCSRNG. S278 functions as the Nucleophile in the catalytic mechanism. K282, Q324, E332, and W375 together coordinate substrate. The active-site Proton donor/acceptor is the H411. Residue N447 is glycosylated (N-linked (GlcNAc...) asparagine).

It belongs to the carbohydrate esterase 15 (CE15) family.

Its subcellular location is the secreted. The catalysed reaction is a 4-O-methyl-alpha-D-glucuronosyl ester derivative + H2O = 4-O-methyl-alpha-D-glucuronate derivative + an alcohol + H(+). Its function is as follows. Glucuronoyl esterase which may play a significant role in biomass degradation, as it is considered to disconnect hemicellulose from lignin through the hydrolysis of the ester bond between 4-O-methyl-D-glucuronic acid residues of glucuronoxylans and aromatic alcohols of lignin. Does not hydrolyze substrates of other carbohydrate esterases such as acetylxylan esterase, acetyl esterase and feruloyl esterase. This Hypocrea jecorina (strain QM6a) (Trichoderma reesei) protein is 4-O-methyl-glucuronoyl methylesterase.